The chain runs to 296 residues: Pantothenate synthetase (296 aa).

30–37 (MGNLHEGH) contacts ATP. Residue histidine 37 is the Proton donor of the active site. Glutamine 61 is a (R)-pantoate binding site. Glutamine 61 is a beta-alanine binding site. An ATP-binding site is contributed by 149–152 (GEKD). Glutamine 155 provides a ligand contact to (R)-pantoate. Residues valine 178 and 186-189 (MSSR) contribute to the ATP site.

It belongs to the pantothenate synthetase family. In terms of assembly, homodimer.

Its subcellular location is the cytoplasm. It catalyses the reaction (R)-pantoate + beta-alanine + ATP = (R)-pantothenate + AMP + diphosphate + H(+). It functions in the pathway cofactor biosynthesis; (R)-pantothenate biosynthesis; (R)-pantothenate from (R)-pantoate and beta-alanine: step 1/1. In terms of biological role, catalyzes the condensation of pantoate with beta-alanine in an ATP-dependent reaction via a pantoyl-adenylate intermediate. The protein is Pantothenate synthetase of Vibrio atlanticus (strain LGP32) (Vibrio splendidus (strain Mel32)).